Here is a 163-residue protein sequence, read N- to C-terminus: Nucleotide-binding protein CKO_02735 (163 aa).

This sequence belongs to the YajQ family.

Nucleotide-binding protein. The polypeptide is Nucleotide-binding protein CKO_02735 (Citrobacter koseri (strain ATCC BAA-895 / CDC 4225-83 / SGSC4696)).